The following is a 227-amino-acid chain: Lipoprotein-releasing system ATP-binding protein LolD (227 aa).

The ABC transporter domain occupies 6–227 (LEMRGITKSY…RLDAGQLSDV (222 aa)). 43 to 50 (APSGAGKS) contacts ATP.

It belongs to the ABC transporter superfamily. Lipoprotein translocase (TC 3.A.1.125) family. In terms of assembly, the complex is composed of two ATP-binding proteins (LolD) and two transmembrane proteins (LolC and LolE).

It localises to the cell inner membrane. In terms of biological role, part of the ABC transporter complex LolCDE involved in the translocation of mature outer membrane-directed lipoproteins, from the inner membrane to the periplasmic chaperone, LolA. Responsible for the formation of the LolA-lipoprotein complex in an ATP-dependent manner. In Roseobacter denitrificans (strain ATCC 33942 / OCh 114) (Erythrobacter sp. (strain OCh 114)), this protein is Lipoprotein-releasing system ATP-binding protein LolD.